A 139-amino-acid chain; its full sequence is D-ribose pyranase (139 aa).

His20 (proton donor) is an active-site residue. Substrate contacts are provided by residues Asp28, His106, and 128 to 130; that span reads YAN.

Belongs to the RbsD / FucU family. RbsD subfamily. Homodecamer.

The protein resides in the cytoplasm. It catalyses the reaction beta-D-ribopyranose = beta-D-ribofuranose. It functions in the pathway carbohydrate metabolism; D-ribose degradation; D-ribose 5-phosphate from beta-D-ribopyranose: step 1/2. Its function is as follows. Catalyzes the interconversion of beta-pyran and beta-furan forms of D-ribose. This chain is D-ribose pyranase, found in Salmonella choleraesuis (strain SC-B67).